The following is a 186-amino-acid chain: Large ribosomal subunit protein uL22 (186 aa).

It belongs to the universal ribosomal protein uL22 family. In terms of assembly, component of the large ribosomal subunit (LSU). Mature N.crassa ribosomes consist of a small (40S) and a large (60S) subunit. The 40S small subunit contains 1 molecule of ribosomal RNA (18S rRNA) and at least 32 different proteins. The large 60S subunit contains 3 rRNA molecules (26S, 5.8S and 5S rRNA) and at least 42 different proteins.

It is found in the cytoplasm. In terms of biological role, component of the ribosome, a large ribonucleoprotein complex responsible for the synthesis of proteins in the cell. The small ribosomal subunit (SSU) binds messenger RNAs (mRNAs) and translates the encoded message by selecting cognate aminoacyl-transfer RNA (tRNA) molecules. The large subunit (LSU) contains the ribosomal catalytic site termed the peptidyl transferase center (PTC), which catalyzes the formation of peptide bonds, thereby polymerizing the amino acids delivered by tRNAs into a polypeptide chain. The nascent polypeptides leave the ribosome through a tunnel in the LSU and interact with protein factors that function in enzymatic processing, targeting, and the membrane insertion of nascent chains at the exit of the ribosomal tunnel. This Neurospora crassa (strain ATCC 24698 / 74-OR23-1A / CBS 708.71 / DSM 1257 / FGSC 987) protein is Large ribosomal subunit protein uL22 (rpl-17).